Consider the following 61-residue polypeptide: Protein SspF (61 aa).

The protein belongs to the alpha/beta-type SASP family.

In terms of biological role, may play some important role in either sporulation or the dormant spore. This chain is Protein SspF (sspF), found in Bacillus subtilis (strain 168).